The following is a 385-amino-acid chain: Centrosomal protein of 44 kDa (385 aa).

A binds with microtubules and centrioles region spans residues 11 to 191 (RKLEQRLRTL…TKCYKSALLE (181 aa)). Positions 194–204 (EEEEPTSDCEE) are enriched in acidic residues. The tract at residues 194–224 (EEEEPTSDCEEDSHLQREMGSPFETAEETPN) is disordered. Coiled-coil stretches lie at residues 224–263 (NSEQVELLRKQLAECQEKLQRLDCVEERLQSLETSVKGKI) and 353–379 (TEESKETTKQRMERITKMMEETSELLK).

In terms of assembly, binds to centriolar microtubules.

It is found in the cytoplasm. The protein resides in the cytoskeleton. The protein localises to the microtubule organizing center. Its subcellular location is the centrosome. It localises to the centriole. It is found in the spindle pole. The protein resides in the midbody. Centriole-enriched microtubule-binding protein involved in centriole biogenesis. In collaboration with CEP295 and POC1B, is required for the centriole-to-centrosome conversion by ensuring the formation of bona fide centriole wall. Functions as a linker component that maintains centrosome cohesion. Associates with CROCC and regulates its stability and localization to the centrosome. This chain is Centrosomal protein of 44 kDa (cep44), found in Xenopus tropicalis (Western clawed frog).